The primary structure comprises 674 residues: Protein kinase C delta type (674 aa).

A C2 domain is found at 1-106 (MAPFLRISFN…KNNGKAEFWL (106 aa)). A phosphothreonine mark is found at Thr43 and Thr50. Residue Tyr64 is modified to Phosphotyrosine. Ser130 is subject to Phosphoserine. Thr141 bears the Phosphothreonine mark. Phosphotyrosine is present on Tyr155. The Phorbol-ester/DAG-type 1 zinc finger occupies 158-208 (NHEFIATFFGQPTFCSVCKEFVWGLNKQGYKCRQCNAAIHKKCIDKIIGRC). The residue at position 218 (Thr218) is a Phosphothreonine. The Phorbol-ester/DAG-type 2 zinc-finger motif lies at 230-280 (PHRFKVYNYMSPTFCDHCGSLLWGLVKQGLKCEDCGMNVHHKCREKVANLC). Position 299 is a phosphoserine; by autocatalysis (Ser299). Tyr311 and Tyr332 each carry phosphotyrosine; by SRC. The Protein kinase domain maps to 347-601 (FTFQKVLGKG…TGNIRIHPFF (255 aa)). An ATP-binding site is contributed by 353–361 (LGKGSFGKV). Tyr372 is modified (phosphotyrosine). An ATP-binding site is contributed by Lys376. Position 449 is a phosphothreonine (Thr449). Residue Asp471 is the Proton acceptor of the active site. Residue Ser504 is modified to Phosphoserine. Thr505 carries the post-translational modification Phosphothreonine; by autocatalysis. Tyr565 is subject to Phosphotyrosine. Residues 602 to 673 (KTINWSLLEK…VNPKFEQFLD (72 aa)) form the AGC-kinase C-terminal domain. Phosphoserine is present on residues Ser643, Ser652, and Ser662.

It belongs to the protein kinase superfamily. AGC Ser/Thr protein kinase family. PKC subfamily. Interacts with PDPK1 (via N-terminal region). Interacts with RAD9A. Interacts with CDCP1. Interacts with MUC1. Interacts with VASP. Interacts with CAVIN3. Interacts with PRKD2 (via N-terminus and zing-finger domain 1 and 2) in response to oxidative stress; the interaction is independent of PRKD2 tyrosine phosphorylation. Interacts with PLSC3; interaction is enhanced by UV irradiation. Autophosphorylated and/or phosphorylated at Thr-505, within the activation loop; phosphorylation at Thr-505 is not a prerequisite for enzymatic activity. Autophosphorylated at Ser-299. Upon TNFSF10/TRAIL treatment, phosphorylated at Tyr-155; phosphorylation is required for its translocation to the endoplasmic reticulum and cleavage by caspase-3. Phosphorylated at Tyr-311, Tyr-332 and Tyr-565; phosphorylation of Tyr-311 and Tyr-565 following thrombin or zymosan stimulation potentiates its kinase activity. Phosphorylated by protein kinase PDPK1; phosphorylation is inhibited by the apoptotic C-terminal cleavage product of PKN2. Phosphorylated at Tyr-311 through a SYK and SRC mechanism downstream of C-type lectin receptors activation, promoting its activation. In terms of processing, proteolytically cleaved into a catalytic subunit and a regulatory subunit by caspase-3 during apoptosis which results in kinase activation. In terms of tissue distribution, isoform 1 is highly expressed in developing pro- and pre-B-cells and moderately in mature T-cells. Isoform 2 is highly expressed in testis and ovary and at a lower level in thymocytes, brain and kidney.

The protein localises to the cytoplasm. It localises to the perinuclear region. Its subcellular location is the nucleus. The protein resides in the cell membrane. It is found in the mitochondrion. The protein localises to the endomembrane system. It catalyses the reaction L-seryl-[protein] + ATP = O-phospho-L-seryl-[protein] + ADP + H(+). The catalysed reaction is L-threonyl-[protein] + ATP = O-phospho-L-threonyl-[protein] + ADP + H(+). The enzyme catalyses L-tyrosyl-[protein] + ATP = O-phospho-L-tyrosyl-[protein] + ADP + H(+). Novel PKCs (PRKCD, PRKCE, PRKCH and PRKCQ) are calcium-insensitive, but activated by diacylglycerol (DAG) and phosphatidylserine. Three specific sites; Thr-505 (activation loop of the kinase domain), Ser-643 (turn motif) and Ser-662 (hydrophobic region), need to be phosphorylated for its full activation. Activated by caspase-3 (CASP3) cleavage during apoptosis. After cleavage, the pseudosubstrate motif in the regulatory subunit is released from the substrate recognition site of the catalytic subunit, which enables PRKCD to become constitutively activated. The catalytic subunit which displays properties of a sphingosine-dependent protein kinase is activated by D-erythro-sphingosine (Sph) or N,N-dimethyl-D-erythrosphingosine (DMS) or N,N,N-trimethyl-D-erythrosphingosine (TMS), but not by ceramide or Sph-1-P and is strongly inhibited by phosphatidylserine. Functionally, calcium-independent, phospholipid- and diacylglycerol (DAG)-dependent serine/threonine-protein kinase that plays contrasting roles in cell death and cell survival by functioning as a pro-apoptotic protein during DNA damage-induced apoptosis, but acting as an anti-apoptotic protein during cytokine receptor-initiated cell death, is involved in tumor suppression, is required for oxygen radical production by NADPH oxidase and acts as a positive or negative regulator in platelet functional responses. Negatively regulates B cell proliferation and also has an important function in self-antigen induced B cell tolerance induction. Upon DNA damage, activates the promoter of the death-promoting transcription factor BCLAF1/Btf to trigger BCLAF1-mediated p53/TP53 gene transcription and apoptosis. In response to oxidative stress, interact with and activate CHUK/IKKA in the nucleus, causing the phosphorylation of p53/TP53. In the case of ER stress or DNA damage-induced apoptosis, can form a complex with the tyrosine-protein kinase ABL1 which trigger apoptosis independently of p53/TP53. In cytosol can trigger apoptosis by activating MAPK11 or MAPK14, inhibiting AKT1 and decreasing the level of X-linked inhibitor of apoptosis protein (XIAP), whereas in nucleus induces apoptosis via the activation of MAPK8 or MAPK9. Upon ionizing radiation treatment, is required for the activation of the apoptosis regulators BAX and BAK, which trigger the mitochondrial cell death pathway. Can phosphorylate MCL1 and target it for degradation which is sufficient to trigger for BAX activation and apoptosis. Is required for the control of cell cycle progression both at G1/S and G2/M phases. Mediates phorbol 12-myristate 13-acetate (PMA)-induced inhibition of cell cycle progression at G1/S phase by up-regulating the CDK inhibitor CDKN1A/p21 and inhibiting the cyclin CCNA2 promoter activity. In response to UV irradiation can phosphorylate CDK1, which is important for the G2/M DNA damage checkpoint activation. Can protect glioma cells from the apoptosis induced by TNFSF10/TRAIL, probably by inducing increased phosphorylation and subsequent activation of AKT1. Can also act as tumor suppressor upon mitogenic stimulation with PMA or TPA. In N-formyl-methionyl-leucyl-phenylalanine (fMLP)-treated cells, is required for NCF1 (p47-phox) phosphorylation and activation of NADPH oxidase activity, and regulates TNF-elicited superoxide anion production in neutrophils, by direct phosphorylation and activation of NCF1 or indirectly through MAPK1/3 (ERK1/2) signaling pathways. Involved in antifungal immunity by mediating phosphorylation and activation of CARD9 downstream of C-type lectin receptors activation, promoting interaction between CARD9 and BCL10, followed by activation of NF-kappa-B and MAP kinase p38 pathways. May also play a role in the regulation of NADPH oxidase activity in eosinophil after stimulation with IL5, leukotriene B4 or PMA. In collagen-induced platelet aggregation, acts a negative regulator of filopodia formation and actin polymerization by interacting with and negatively regulating VASP phosphorylation. Downstream of PAR1, PAR4 and CD36/GP4 receptors, regulates differentially platelet dense granule secretion; acts as a positive regulator in PAR-mediated granule secretion, whereas it negatively regulates CD36/GP4-mediated granule release. Phosphorylates MUC1 in the C-terminal and regulates the interaction between MUC1 and beta-catenin. The catalytic subunit phosphorylates 14-3-3 proteins (YWHAB, YWHAZ and YWHAH) in a sphingosine-dependent fashion. Phosphorylates ELAVL1 in response to angiotensin-2 treatment. Phosphorylates mitochondrial phospholipid scramblase 3 (PLSCR3), resulting in increased cardiolipin expression on the mitochondrial outer membrane which facilitates apoptosis. Phosphorylates SMPD1 which induces SMPD1 secretion. This is Protein kinase C delta type from Mus musculus (Mouse).